The sequence spans 279 residues: Movement protein (279 aa).

The disordered stretch occupies residues 246–279 (SESEDLNVESPPAAIGSSSASRSEAFRPQVVNGL). Over residues 254-268 (ESPPAAIGSSSASRS) the composition is skewed to low complexity.

The protein belongs to the cucumovirus movement protein family.

The protein localises to the host cell junction. It is found in the host plasmodesma. In terms of biological role, transports viral genome to neighboring plant cells directly through plasmosdesmata, without any budding. The movement protein allows efficient cell to cell propagation, by bypassing the host cell wall barrier. Acts by forming a tubular structure at the host plasmodesmata, enlarging it enough to allow free passage of virion capsids. The polypeptide is Movement protein (Cucurbita pepo (Vegetable marrow)).